The primary structure comprises 338 residues: Putative peptide import ATP-binding protein BMEII0863 (338 aa).

An ABC transporter domain is found at 10–263 (KGLRTVFRTR…PRHPYTMGLL (254 aa)). 43–50 (GESGSGKS) is a binding site for ATP.

This sequence belongs to the ABC transporter superfamily. The complex is composed of two ATP-binding proteins (BMEII0863 and BMEII0864), two transmembrane proteins (BMEII0860 and BMEII0861) and a solute-binding protein (BMEII0859).

Its subcellular location is the cell inner membrane. Functionally, probably part of an ABC transporter complex that could be involved in peptide import. Probably responsible for energy coupling to the transport system. The chain is Putative peptide import ATP-binding protein BMEII0863 from Brucella melitensis biotype 1 (strain ATCC 23456 / CCUG 17765 / NCTC 10094 / 16M).